We begin with the raw amino-acid sequence, 993 residues long: Synaptonemal complex protein 1 (993 aa).

A Mediates head to head self-assembly of N-terminal ends motif is present at residues 98-108; that stretch reads PMSRLYSKLYK. The Nuclear localization signal signature appears at 114-117; it reads KKWK. 2 coiled-coil regions span residues 117–172 and 215–688; these read KVSI…LIKE and IEKM…EIEN. Positions 203–359 are interaction with SYCE3; that stretch reads ETRQVYVDLN…SQLTEVKEAQ (157 aa). The required for pH-induced assembly of C-terminal ends into antiparallel tetramers stretch occupies residues 694–788; it reads GKLLGEVEKA…VSLKKQLEIE (95 aa). The Nuclear localization signal signature appears at 697–700; it reads LGEV. Residues 764 to 808 are a coiled coil; the sequence is KIALETELSNIRNELVSLKKQLEIEKEEKEKLKMAKENTAILKDK. The interval 801-993 is DNA-binding; sequence NTAILKDKKD…RLKEAEKLFS (193 aa). Ser820 carries the post-translational modification Phosphoserine. The segment at 824–861 is disordered; the sequence is TSWKFDSKTTPSQNISRLSSSMDSGKSKDNRDNLRASA. Residues 831 to 847 show a composition bias toward polar residues; it reads KTTPSQNISRLSSSMDS. The segment covering 848-857 has biased composition (basic and acidic residues); the sequence is GKSKDNRDNL. The short motif at 898–901 is the Nuclear localization signal element; it reads KKRK.

Structural component of synaptonemal complexes. Homotetramer that consists of an N-terminal four-helical bundle that bifurcates into two elongated C-terminal dimeric coiled coils. This tetrameric building block potentially self-assembles into a supramolecular zipper-like lattice to mediate meiotic chromosome synapsis. Self-assembly is likely initiated by local proton density at chromosome axis, which is predicted to trigger antiparallel back to back assembly of adjacent C-terminal ends into tetrameric structures that anchor to chromosomal DNA. Then the N-terminal ends are predicted to undergo cooperative antiparallel head to head assembly at the midline of synaptonemal complexes central element to form a zipper-like lattice between properly aligned homologous chromosomes. The nascent synapsis generated by SYCP1 is stabilized through interaction with central element proteins SYCE1 and SYCE2. Interacts (via tetrameric core) with SYCE3; the interaction remodels SYCP1 homotetramers to 2:1 heterotrimers with SYCE3. SYCP1/SYCE3 heterotrimers form lattice assemblies as part of the mature synaptonemal complex via both lateral and head-to-head interactions. Forms a complex with EWSR1, PRDM9, SYCP3 and REC8; complex formation is dependent of phosphorylated form of REC8 and requires PRDM9 bound to hotspot DNA; EWSR1 joins PRDM9 with the chromosomal axis through REC8. Interacts with SPO16. As to expression, detected in testis. Detected in spermatocytes (at protein level).

It is found in the nucleus. The protein resides in the chromosome. It localises to the centromere. Major component of the transverse filaments of synaptonemal complexes, formed between homologous chromosomes during meiotic prophase. Required for normal assembly of the central element of the synaptonemal complexes. Required for normal centromere pairing during meiosis. Required for normal meiotic chromosome synapsis during oocyte and spermatocyte development and for normal male and female fertility. The polypeptide is Synaptonemal complex protein 1 (Mus musculus (Mouse)).